A 509-amino-acid polypeptide reads, in one-letter code: Maturase K (509 aa).

It belongs to the intron maturase 2 family. MatK subfamily.

It localises to the plastid. The protein resides in the chloroplast. Its function is as follows. Usually encoded in the trnK tRNA gene intron. Probably assists in splicing its own and other chloroplast group II introns. The chain is Maturase K from Pereskia aculeata (Barbados gooseberry).